The sequence spans 472 residues: 3-isopropylmalate dehydratase large subunit (472 aa).

[4Fe-4S] cluster is bound by residues cysteine 349, cysteine 409, and cysteine 412.

Belongs to the aconitase/IPM isomerase family. LeuC type 1 subfamily. Heterodimer of LeuC and LeuD. [4Fe-4S] cluster serves as cofactor.

The enzyme catalyses (2R,3S)-3-isopropylmalate = (2S)-2-isopropylmalate. Its pathway is amino-acid biosynthesis; L-leucine biosynthesis; L-leucine from 3-methyl-2-oxobutanoate: step 2/4. Catalyzes the isomerization between 2-isopropylmalate and 3-isopropylmalate, via the formation of 2-isopropylmaleate. This Rhodospirillum rubrum (strain ATCC 11170 / ATH 1.1.1 / DSM 467 / LMG 4362 / NCIMB 8255 / S1) protein is 3-isopropylmalate dehydratase large subunit.